Reading from the N-terminus, the 615-residue chain is DNA mismatch repair protein MutL (615 aa).

Residues Phe363–Tyr397 form a disordered region. Residues Ala364 to Ala387 are compositionally biased toward low complexity.

Belongs to the DNA mismatch repair MutL/HexB family.

Its function is as follows. This protein is involved in the repair of mismatches in DNA. It is required for dam-dependent methyl-directed DNA mismatch repair. May act as a 'molecular matchmaker', a protein that promotes the formation of a stable complex between two or more DNA-binding proteins in an ATP-dependent manner without itself being part of a final effector complex. The sequence is that of DNA mismatch repair protein MutL from Shigella flexneri.